A 240-amino-acid chain; its full sequence is Putative glycyl-radical enzyme activating enzyme MJ1227 (240 aa).

Residues 14 to 232 (IDYPKKASAV…KKYIDNVVIR (219 aa)) enclose the Radical SAM core domain. Residues Cys29, Cys33, and Cys36 each coordinate [4Fe-4S] cluster. S-adenosyl-L-methionine contacts are provided by residues 35-37 (YCH), Gly71, and 126-128 (FDK).

It belongs to the organic radical-activating enzymes family. Requires [4Fe-4S] cluster as cofactor.

The enzyme catalyses glycyl-[protein] + reduced [flavodoxin] + S-adenosyl-L-methionine = glycin-2-yl radical-[protein] + semiquinone [flavodoxin] + 5'-deoxyadenosine + L-methionine + H(+). This is Putative glycyl-radical enzyme activating enzyme MJ1227 from Methanocaldococcus jannaschii (strain ATCC 43067 / DSM 2661 / JAL-1 / JCM 10045 / NBRC 100440) (Methanococcus jannaschii).